We begin with the raw amino-acid sequence, 352 residues long: Farnesyl pyrophosphate synthase (352 aa).

Isopentenyl diphosphate is bound by residues Lys52, Arg55, and Gln93. Mg(2+)-binding residues include Asp100 and Asp104. Arg109 lines the dimethylallyl diphosphate pocket. Arg110 is an isopentenyl diphosphate binding site. The dimethylallyl diphosphate site is built by Lys197, Thr198, Gln237, Lys254, and Lys263.

Belongs to the FPP/GGPP synthase family. Mg(2+) serves as cofactor.

It catalyses the reaction isopentenyl diphosphate + dimethylallyl diphosphate = (2E)-geranyl diphosphate + diphosphate. It carries out the reaction isopentenyl diphosphate + (2E)-geranyl diphosphate = (2E,6E)-farnesyl diphosphate + diphosphate. The protein operates within isoprenoid biosynthesis; farnesyl diphosphate biosynthesis; farnesyl diphosphate from geranyl diphosphate and isopentenyl diphosphate: step 1/1. Its pathway is isoprenoid biosynthesis; geranyl diphosphate biosynthesis; geranyl diphosphate from dimethylallyl diphosphate and isopentenyl diphosphate: step 1/1. In terms of biological role, farnesyl pyrophosphate synthase; part of the second module of ergosterol biosynthesis pathway that includes the middle steps of the pathway. ERG20 catalyzes the sequential condensation of isopentenyl pyrophosphate with dimethylallyl pyrophosphate, and then with the resultant geranylpyrophosphate to the ultimate product farnesyl pyrophosphate. The second module is carried out in the vacuole and involves the formation of farnesyl diphosphate, which is also an important intermediate in the biosynthesis of ubiquinone, dolichol, heme and prenylated proteins. Activity by the mevalonate kinase ERG12 first converts mevalonate into 5-phosphomevalonate. 5-phosphomevalonate is then further converted to 5-diphosphomevalonate by the phosphomevalonate kinase ERG8. The diphosphomevalonate decarboxylase MVD1/ERG19 then produces isopentenyl diphosphate. The isopentenyl-diphosphate delta-isomerase IDI1 then catalyzes the 1,3-allylic rearrangement of the homoallylic substrate isopentenyl (IPP) to its highly electrophilic allylic isomer, dimethylallyl diphosphate (DMAPP). Finally the farnesyl diphosphate synthase ERG20 catalyzes the sequential condensation of isopentenyl pyrophosphate with dimethylallyl pyrophosphate, and then with the resultant geranylpyrophosphate to the ultimate product farnesyl pyrophosphate. The polypeptide is Farnesyl pyrophosphate synthase (ERG20) (Saccharomyces cerevisiae (strain ATCC 204508 / S288c) (Baker's yeast)).